We begin with the raw amino-acid sequence, 567 residues long: Interleukin-1 receptor-like 1 (567 aa).

The first 26 residues, 1–26 (MIDRQRMGLWALAILTLPMYLTVTEG), serve as a signal peptide directing secretion. Ig-like C2-type domains are found at residues 27–109 (SKSS…LNVT) and 120–203 (PDYL…VTAT). The Extracellular portion of the chain corresponds to 27–332 (SKSSWGLENE…LRRKQPIDHR (306 aa)). A disulfide bridge connects residues C42 and C93. N-linked (GlcNAc...) asparagine glycosylation is found at N60, N101, N107, N146, N176, and N194. 2 cysteine pairs are disulfide-bonded: C117–C157 and C139–C187. Residues 204 to 216 (RSFTVEEKGFSMF) are flexible linker. One can recognise an Ig-like C2-type 3 domain in the interval 217–324 (PVITNPPYNH…GMIRHTIRLR (108 aa)). N225, N259, and N278 each carry an N-linked (GlcNAc...) asparagine glycan. 2 disulfide bridges follow: C240/C308 and C243/C287. K326 participates in a covalent cross-link: Glycyl lysine isopeptide (Lys-Gly) (interchain with G-Cter in ubiquitin). Residues 333-355 (SIYYIVAGCSLLLMFINVLVIVL) form a helical membrane-spanning segment. Residues 356 to 567 (KVFWIEVALF…GKACLDLKHF (212 aa)) are Cytoplasmic-facing. The 161-residue stretch at 380–540 (KLYDAYIIYP…KFWKHVRYQM (161 aa)) folds into the TIR domain. A Phosphoserine; by GSK3-beta modification is found at S442. The active site involves E466.

This sequence belongs to the interleukin-1 receptor family. As to quaternary structure, interacts with MYD88, IRAK1, IRAK4, and TRAF6. Bound to its ligand IL33, interacts with IL1RAP to form the minimal interleukin-33 signaling complex with a 1:1:1 stoichiometry. Interacts with KIT (bound to KITLG/SCF). A mast cell-specific KITLG/SCF-induced interleukin-33 signaling complex contains IL1RL1, IL1RAP, KIT and MYD88. Interacts with TMED1. Phosphorylated by GSK3B at Ser-442; leading to proteasomal degradation. Post-translationally, ubiquitinated at Lys-326 in a FBXL19-mediated manner; leading to proteasomal degradation. Ubiquitination by TRAF6 via 'Lys-27'-linked polyubiquitination and deubiquitination by USP38 serves as a critical regulatory mechanism for fine-tuning IL1RL1-mediated inflammatory response. As to expression, predominantly expressed in hematopoietic tissues, and in macrophage, erythroid, epithelial and fibroblast cell lines. Isoform A is expressed in brain astrocytes and microglia. Isoform B is expressed in brain endothelial cells.

The protein resides in the cell membrane. It localises to the secreted. It catalyses the reaction NAD(+) + H2O = ADP-D-ribose + nicotinamide + H(+). Its function is as follows. Receptor for interleukin-33 (IL-33) which plays crucial roles in innate and adaptive immunity, contributing to tissue homeostasis and responses to environmental stresses together with coreceptor IL1RAP. Its stimulation recruits MYD88, IRAK1, IRAK4, and TRAF6, followed by phosphorylation of MAPK3/ERK1 and/or MAPK1/ERK2, MAPK14, and MAPK8. Possibly involved in helper T-cell function. Upon tissue injury, induces UCP2-dependent mitochondrial rewiring that attenuates the generation of reactive oxygen species and preserves the integrity of Krebs cycle required for persistent production of itaconate and subsequent GATA3-dependent differentiation of inflammation-resolving alternatively activated macrophages. Functionally, inhibits IL-33 signaling. This Mus musculus (Mouse) protein is Interleukin-1 receptor-like 1 (Il1rl1).